Consider the following 374-residue polypeptide: DNA-directed RNA polymerase subunit alpha (374 aa).

Residues 1 to 270 are alpha N-terminal domain (alpha-NTD); that stretch reads MIFDEDSSSV…DQFQQFINFD (270 aa). The interval 282 to 374 is alpha C-terminal domain (alpha-CTD); that stretch reads KDVLPYDSNL…ESLSKQYSEE (93 aa).

This sequence belongs to the RNA polymerase alpha chain family. In terms of assembly, homodimer. The RNAP catalytic core consists of 2 alpha, 1 beta, 1 beta' and 1 omega subunit. When a sigma factor is associated with the core the holoenzyme is formed, which can initiate transcription.

It catalyses the reaction RNA(n) + a ribonucleoside 5'-triphosphate = RNA(n+1) + diphosphate. In terms of biological role, DNA-dependent RNA polymerase catalyzes the transcription of DNA into RNA using the four ribonucleoside triphosphates as substrates. The protein is DNA-directed RNA polymerase subunit alpha of Ehrlichia ruminantium (strain Gardel).